A 206-amino-acid polypeptide reads, in one-letter code: Somatotropin (206 aa).

A signal peptide spans 1–22 (MAGLHFFPALLALLMASLQTHQ). Disulfide bonds link Cys75-Cys179 and Cys196-Cys204.

It belongs to the somatotropin/prolactin family.

The protein resides in the secreted. Its function is as follows. Growth hormone plays an important role in growth control and is involved in the regulation of several anabolic processes. Implicated as an osmoregulatory substance important for seawater adaptation. The chain is Somatotropin (gh) from Protopterus annectens (African lungfish).